Here is a 1359-residue protein sequence, read N- to C-terminus: Nuclear protein STH1/NPS1 (1359 aa).

A Phosphoserine modification is found at S38. An HSA domain is found at 307–383; the sequence is LERQQLLEKR…AKQRLAALKS (77 aa). Residues 482–647 enclose the Helicase ATP-binding domain; the sequence is VSLYNNHLNG…WALLNFVLPK (166 aa). 495 to 502 is a binding site for ATP; that stretch reads DEMGLGKT. A DEGH box motif is present at residues 597–600; it reads DEGH. The region spanning 795–956 is the Helicase C-terminal domain; it reads LLDRVLPKFK…NKSTAEEQEA (162 aa). Positions 1090–1246 are disordered; the sequence is RERRRLRQNG…TAAKKTKTKS (157 aa). Positions 1108–1126 are enriched in polar residues; it reads LENTPEASETSLIENNSFT. Basic residues-rich tracts occupy residues 1143 to 1154 and 1198 to 1210; these read RSKRRSSRKKRT and KKKKPKLTVKIKL. Over residues 1219–1232 the composition is skewed to basic and acidic residues; the sequence is NDGKRAEEKPESKS. The segment covering 1233 to 1246 has biased composition (basic residues); it reads PAKKTAAKKTKTKS. One can recognise a Bromo domain in the interval 1257–1357; the sequence is KLVEEMREQL…EFTDEWFKEH (101 aa).

This sequence belongs to the SNF2/RAD54 helicase family. As to quaternary structure, interacts directly with SFH1, CSE4, histones H3, H4 and H2B, and via its N-terminus, with RSC8. Interacts with LDB7, NPL6 and RTT102. Component of the two forms of the RSC complex composed of at least either RSC1 or RSC2, and ARP7, ARP9, LDB7, NPL6, RSC3, RSC30, RSC4, RSC58, RSC6, RSC8, RSC9, SFH1, STH1, HTL1 and probably RTT102. The complexes interact with histone and histone variant components of centromeric chromatin.

It localises to the nucleus. It catalyses the reaction ATP + H2O = ADP + phosphate + H(+). Functionally, catalytic component of the chromatin structure-remodeling complex (RSC), which is involved in transcription regulation and nucleosome positioning. RSC is responsible for the transfer of a histone octamer from a nucleosome core particle to naked DNA. The reaction requires ATP and involves an activated RSC-nucleosome intermediate. Remodeling reaction also involves DNA translocation, DNA twist and conformational change. As a reconfigurer of centromeric and flanking nucleosomes, RSC complex is required both for proper kinetochore function in chromosome segregation and, via a PKC1-dependent signaling pathway, for organization of the cellular cytoskeleton. This subunit is the essential ATPase of the complex. It is a DNA translocase capable of nucleosome remodeling. Required for full expression of early meiotic genes. Essential for mitotic growth and repression of CHA1 expression. Also involved in G2 phase control. The sequence is that of Nuclear protein STH1/NPS1 (STH1) from Saccharomyces cerevisiae (strain ATCC 204508 / S288c) (Baker's yeast).